A 208-amino-acid polypeptide reads, in one-letter code: MNVNVINHPLVRHKLTLMREADCSTYKFRTLTTELARLMAYEASRDFEIEKYLIDGWCGQIEGDRIKGKTLTVVPILRAGLGMLDGVLDLIPTAKISVVGLQRDEETLKPISYFEKFVDSMDERPALIIDPMLATGGSMVATIDLLKEKGCRNIKALVLVAAPEGVKAVNDAHPDVTIYTAALDSRLNENGYIIPGLGDAGDKIFGTR.

Residues R78, R103, and 130–138 (DPMLATGGS) contribute to the 5-phospho-alpha-D-ribose 1-diphosphate site. Uracil contacts are provided by residues I193 and 198-200 (GDA). D199 contacts 5-phospho-alpha-D-ribose 1-diphosphate.

It belongs to the UPRTase family. It depends on Mg(2+) as a cofactor.

The catalysed reaction is UMP + diphosphate = 5-phospho-alpha-D-ribose 1-diphosphate + uracil. It participates in pyrimidine metabolism; UMP biosynthesis via salvage pathway; UMP from uracil: step 1/1. Its activity is regulated as follows. Allosterically activated by GTP. Its function is as follows. Catalyzes the conversion of uracil and 5-phospho-alpha-D-ribose 1-diphosphate (PRPP) to UMP and diphosphate. The chain is Uracil phosphoribosyltransferase from Neisseria gonorrhoeae (strain ATCC 700825 / FA 1090).